The primary structure comprises 131 residues: Snaclec bitiscetin subunit alpha (131 aa).

3 cysteine pairs are disulfide-bonded: Cys4–Cys15, Cys32–Cys125, and Cys100–Cys117. One can recognise a C-type lectin domain in the interval 11-126 (YKGHCYKVFK…CGEKNPFICK (116 aa)).

The protein belongs to the snaclec family. Heterodimer of subunits alpha and beta; disulfide-linked. As to expression, expressed by the venom gland.

Its subcellular location is the secreted. Its function is as follows. Snaclec that binds to von Willebrand factor (VWF) and induces its interaction with GPIbalpha (GP1BA) (via the vWF A1 domain), resulting in platelet aggregation. This is Snaclec bitiscetin subunit alpha from Bitis arietans (African puff adder).